The sequence spans 137 residues: Small ribosomal subunit protein uS12 (137 aa).

2 disordered regions span residues 1 to 22 (MPTINQLVRKPRKSKVSKSKSP) and 35 to 57 (ATNNAAPQKRGVATRVGTMTPKK). The span at 9–18 (RKPRKSKVSK) shows a compositional bias: basic residues. A 3-methylthioaspartic acid modification is found at aspartate 102.

The protein belongs to the universal ribosomal protein uS12 family. Part of the 30S ribosomal subunit. Contacts proteins S8 and S17. May interact with IF1 in the 30S initiation complex.

With S4 and S5 plays an important role in translational accuracy. Its function is as follows. Interacts with and stabilizes bases of the 16S rRNA that are involved in tRNA selection in the A site and with the mRNA backbone. Located at the interface of the 30S and 50S subunits, it traverses the body of the 30S subunit contacting proteins on the other side and probably holding the rRNA structure together. The combined cluster of proteins S8, S12 and S17 appears to hold together the shoulder and platform of the 30S subunit. The chain is Small ribosomal subunit protein uS12 from Leuconostoc mesenteroides subsp. mesenteroides (strain ATCC 8293 / DSM 20343 / BCRC 11652 / CCM 1803 / JCM 6124 / NCDO 523 / NBRC 100496 / NCIMB 8023 / NCTC 12954 / NRRL B-1118 / 37Y).